The sequence spans 346 residues: Methylthioribose-1-phosphate isomerase (346 aa).

Substrate is bound by residues 54–56 (RGA), R91, and Q192. D233 (proton donor) is an active-site residue. 243-244 (NK) provides a ligand contact to substrate.

This sequence belongs to the eIF-2B alpha/beta/delta subunits family. MtnA subfamily.

The enzyme catalyses 5-(methylsulfanyl)-alpha-D-ribose 1-phosphate = 5-(methylsulfanyl)-D-ribulose 1-phosphate. It functions in the pathway amino-acid biosynthesis; L-methionine biosynthesis via salvage pathway; L-methionine from S-methyl-5-thio-alpha-D-ribose 1-phosphate: step 1/6. Catalyzes the interconversion of methylthioribose-1-phosphate (MTR-1-P) into methylthioribulose-1-phosphate (MTRu-1-P). This is Methylthioribose-1-phosphate isomerase from Yersinia pseudotuberculosis serotype IB (strain PB1/+).